The sequence spans 631 residues: Hepatocyte nuclear factor 1-alpha (631 aa).

The interval 1–31 is dimerization; that stretch reads MVSKLSQLQTELLAALLESGLSKEALIQALG. Positions 1–32 constitute an HNF-p1 domain; sequence MVSKLSQLQTELLAALLESGLSKEALIQALGE. A disordered region spans residues 40–81; sequence GEGPLDKGESCGGGRGELAELPNGLGETRGSEDETDDDGEDF. Ser-70 is modified (phosphoserine). At Thr-74 the chain carries Phosphothreonine. In terms of domain architecture, POU-specific atypical spans 87–182; it reads KELENLSPEE…VAQQFTHAGQ (96 aa). At Ser-93 the chain carries Phosphoserine. Residue Lys-117 forms a Glycyl lysine isopeptide (Lys-Gly) (interchain with G-Cter in ubiquitin) linkage. Interaction with DNA stretches follow at residues 130-132, 143-149, 155-158, and 203-206; these read QRE, HLSQHLN, KTQK, and RFKW. The interval 183–205 is disordered; it reads GGLIEEPTGDELPTKKGRRNRFK. Positions 197 to 205 match the Nuclear localization signal motif; that stretch reads KKGRRNRFK. The segment at residues 199–279 is a DNA-binding region (homeobox; HNF1-type); the sequence is GRRNRFKWGP…NRRKEEAFRH (81 aa). At Ser-247 the chain carries Phosphoserine. Interaction with DNA regions lie at residues 263-265 and 270-273; these read RVY and NRRK. Disordered regions lie at residues 283–358 and 545–567; these read MDTY…GLEP and SDTE…TLHV. The segment covering 288–298 has biased composition (pro residues); sequence GPPPGPGPGPA. A Phosphoserine modification is found at Ser-313. The segment covering 325–353 has biased composition (polar residues); it reads PATSETAEVPSSSGGPLVTVSTPLHQVSP.

This sequence belongs to the HNF1 homeobox family. As to quaternary structure, binds DNA as a dimer. Heterotetramer with PCBD1; formed by a dimer of dimers. Interacts with PCBD1. Interacts with BHLHE41. Interacts with NR5A2. Interacts with SPOP; this interaction promotes ubiquitination and degradation of HNF1A. In terms of processing, ubiquitinated in s SPOP-dependent manner; leading to prteasomal degradation. Liver.

The protein localises to the nucleus. Transcriptional activator that regulates the tissue specific expression of multiple genes, especially in pancreatic islet cells and in liver. Binds to the inverted palindrome 5'-GTTAATNATTAAC-3'. Activates the transcription of CYP1A2, CYP2E1 and CYP3A11. Functionally, (Microbial infection) Plays a crucial role for hepatitis B virus gene transcription and DNA replication. Mechanistically, synergistically cooperates with NR5A2 to up-regulate the activity of one of the critical cis-elements in the hepatitis B virus genome enhancer II (ENII). This Homo sapiens (Human) protein is Hepatocyte nuclear factor 1-alpha (HNF1A).